An 88-amino-acid chain; its full sequence is MLSRRTKTIVVCTLVCMARLNVYVPDELAERARARGLNVSALTQAAISAELENSATDAWLEGLEPRSTGARHDDVLGAIDAARDEFEA.

Its function is as follows. Antitoxin component of a type II toxin-antitoxin (TA) system. This is Antitoxin VapB3 (vapB3) from Mycobacterium tuberculosis (strain CDC 1551 / Oshkosh).